A 350-amino-acid polypeptide reads, in one-letter code: MSTRLGDLVERLGGRLIGDADIEVVGIAPLGDADASHITFLSNPKLRGQAAQTRAAALILSAADDEIVAANYQGARIVADNPYAYFARAAQLFAALHAYVAPAGIHPTASVDPQAKVAASASIGPHVTVEAGAIIENACVIDAGCFIGRNARIGAATHFYPRVTFLAGCSIGQRGIVHPGAVIGADGFGFANEGGAWIKIPQTGAVSIGDDVEIGANTSIDRGALADTVIEDGVKLDNQIQIGHNCHIGAHTAMAGCVGVAGSAVIGKYCTFGGAAMVLGHLTIADRVHISSGSLVSRSIKEPGQYTGFYPLAKNAEWEKSAVIVRNLAAMREKIREMEKTIKSLGDEQE.

His-244 functions as the Proton acceptor in the catalytic mechanism.

It belongs to the transferase hexapeptide repeat family. LpxD subfamily. Homotrimer.

It catalyses the reaction a UDP-3-O-[(3R)-3-hydroxyacyl]-alpha-D-glucosamine + a (3R)-hydroxyacyl-[ACP] = a UDP-2-N,3-O-bis[(3R)-3-hydroxyacyl]-alpha-D-glucosamine + holo-[ACP] + H(+). It participates in bacterial outer membrane biogenesis; LPS lipid A biosynthesis. Functionally, catalyzes the N-acylation of UDP-3-O-acylglucosamine using 3-hydroxyacyl-ACP as the acyl donor. Is involved in the biosynthesis of lipid A, a phosphorylated glycolipid that anchors the lipopolysaccharide to the outer membrane of the cell. This Herminiimonas arsenicoxydans protein is UDP-3-O-acylglucosamine N-acyltransferase.